Consider the following 423-residue polypeptide: Kynureninase (423 aa).

Pyridoxal 5'-phosphate contacts are provided by residues L105, S106, 133–136 (FPSD), D218, H221, and Y243. Residue K244 is modified to N6-(pyridoxal phosphate)lysine. Pyridoxal 5'-phosphate-binding residues include W273 and N301.

It belongs to the kynureninase family. Homodimer. It depends on pyridoxal 5'-phosphate as a cofactor.

It carries out the reaction L-kynurenine + H2O = anthranilate + L-alanine + H(+). It catalyses the reaction 3-hydroxy-L-kynurenine + H2O = 3-hydroxyanthranilate + L-alanine + H(+). Its pathway is amino-acid degradation; L-kynurenine degradation; L-alanine and anthranilate from L-kynurenine: step 1/1. It participates in cofactor biosynthesis; NAD(+) biosynthesis; quinolinate from L-kynurenine: step 2/3. Functionally, catalyzes the cleavage of L-kynurenine (L-Kyn) and L-3-hydroxykynurenine (L-3OHKyn) into anthranilic acid (AA) and 3-hydroxyanthranilic acid (3-OHAA), respectively. This chain is Kynureninase, found in Xanthomonas oryzae pv. oryzae (strain KACC10331 / KXO85).